The chain runs to 454 residues: O-phospho-L-seryl-tRNA:Cys-tRNA synthase 2 (454 aa).

Pyridoxal 5'-phosphate contacts are provided by residues 146 to 147 (AR), asparagine 251, and 274 to 276 (SGH). The residue at position 277 (lysine 277) is an N6-(pyridoxal phosphate)lysine.

It belongs to the SepCysS family. In terms of assembly, homodimer. Interacts with SepRS. Pyridoxal 5'-phosphate serves as cofactor.

It catalyses the reaction O-phospho-L-seryl-tRNA(Cys) + hydrogen sulfide + H(+) = L-cysteinyl-tRNA(Cys) + phosphate. In terms of biological role, converts O-phospho-L-seryl-tRNA(Cys) (Sep-tRNA(Cys)) to L-cysteinyl-tRNA(Cys) (Cys-tRNA(Cys)). The sequence is that of O-phospho-L-seryl-tRNA:Cys-tRNA synthase 2 from Methanoregula boonei (strain DSM 21154 / JCM 14090 / 6A8).